We begin with the raw amino-acid sequence, 188 residues long: Putative manganese efflux pump MntP (188 aa).

A run of 6 helical transmembrane segments spans residues L3–A23, I35–V55, W70–G90, W104–F126, M140–F160, and A167–I187.

The protein belongs to the MntP (TC 9.B.29) family.

It localises to the cell inner membrane. Its function is as follows. Probably functions as a manganese efflux pump. This chain is Putative manganese efflux pump MntP, found in Neisseria meningitidis serogroup C / serotype 2a (strain ATCC 700532 / DSM 15464 / FAM18).